The following is an 85-amino-acid chain: Fungal defensin triintsin (85 aa).

An N-terminal signal peptide occupies residues 1-21 (MQFTKLATVLIVSLMGSAAIA). Positions 22–47 (APSVDNAPAVAAEEVAAAPAENLEKR) are excised as a propeptide. Intrachain disulfides connect Cys51/Cys72, Cys58/Cys80, and Cys62/Cys82.

Belongs to the invertebrate defensin family. Post-translationally, disulfide bonds are essential for antimicrobial activity.

The protein localises to the secreted. In terms of biological role, antimicrobial peptide with broad-spectrum activity against Gram-positive bacteria, Gram-negative bacteria, and fungi. Also inhibits clinical isolates, including methicillin-resistant S.aureus (MRSA) (MIC=32 uM), K.pneumoniae, C.albicans and C.parapsilosis. Displays minimal inhibitory concentration (MIC) values similar to minimal bactericidal concentrations (MBC), suggesting a disruptive mechanism mode of action associated with membrane lysis. In vitro, shows hemolytic activity against human red blood cells. This Trichophyton interdigitale (strain MR816) protein is Fungal defensin triintsin.